The following is an 815-amino-acid chain: MDIGLRIFVVFVLLVAVTAEVYIVTMEGDPIISYKGGENGFEATAVESDEKIDTSSELVTVYARHLERKHDMILGMLFEEGSYKKLYSYKHLINGFAAHVSPEQAETLRRAPGVRSVDKDWKVRRLTTHTPEFLGLPTDVWPTGGGFDRAGEDIVIGFVDSGIYPHHPSFASHHRLPYGPLPHYKGKCEEDPHTKKSFCNRKIVGAQHFAEAAKAAGAFNPDIDYASPMDGDGHGSHTAAIAAGNNGIPLRMHGYEFGKASGMAPRARIAVYKALYRLFGGFVADVVAAIDQAVHDGVDILSLSVGPNSPPTTTKTTFLNPFDATLLGAVKAGVFVAQAAGNGGPFPKTLVSYSPWITTVAAAIDDRRYKNHLTLGNGKMLAGMGLSPPTRPHRLYTLVSANDVLLDSSVSKYNPSDCQRPEVFNKKLVEGNILLCGYSFNFVVGTASIKKVVATAKHLGAAGFVLVVENVSPGTKFDPVPSAIPGILITDVSKSMDLIDYYNASTSRDWTGRVKSFKAEGSIGDGLAPVLHKSAPQVALFSARGPNTKDFSFQDADLLKPDILAPGYLIWAAWCPNGTDEPNYVGEGFALISGTSMAAPHIAGIAALVKQKHPQWSPAAIKSALMTTSTVIDRAGRLLQAQQYSDTEAVTLVKATPFDYGSGHVNPSAALDPGLIFDAGYEDYLGFLCTTPGISAHEIRNYTNTACNYDMKHPSNFNAPSIAVSHLVGTQTVTRKVTNVAEVEETYTITARMQPSIAIEVNPPAMTLRPGATRTFSVTMTVRSVSGVYSFGEVKLKGSRGHKVRIPVVALGHRR.

The signal sequence occupies residues 1 to 19; that stretch reads MDIGLRIFVVFVLLVAVTA. In terms of domain architecture, Inhibitor I9 spans 21–124; the sequence is VYIVTMEGDP…RSVDKDWKVR (104 aa). The Peptidase S8 domain occupies 120 to 671; sequence DWKVRRLTTH…SGHVNPSAAL (552 aa). Residues D160 and H234 each act as charge relay system in the active site. Residues 397-501 form the PA domain; sequence TLVSANDVLL…VSKSMDLIDY (105 aa). N503 and N577 each carry an N-linked (GlcNAc...) asparagine glycan. The Charge relay system role is filled by S596. A glycan (N-linked (GlcNAc...) asparagine) is linked at N701.

The protein belongs to the peptidase S8 family. In terms of tissue distribution, expressed in roots, leaves and flowers of mature plants.

This chain is Subtilisin-like protease SBT2.5, found in Arabidopsis thaliana (Mouse-ear cress).